Here is a 511-residue protein sequence, read N- to C-terminus: 2-isopropylmalate synthase (511 aa).

One can recognise a Pyruvate carboxyltransferase domain in the interval 5–267; it reads LIVFDTTLRD…DTNVDISQIV (263 aa). Mn(2+)-binding residues include Asp14, His202, His204, and Asn238. The interval 393 to 511 is regulatory domain; it reads KLSWLKVVSE…YPVERAYPQV (119 aa).

Belongs to the alpha-IPM synthase/homocitrate synthase family. LeuA type 1 subfamily. As to quaternary structure, homodimer. It depends on Mn(2+) as a cofactor.

The protein resides in the cytoplasm. It carries out the reaction 3-methyl-2-oxobutanoate + acetyl-CoA + H2O = (2S)-2-isopropylmalate + CoA + H(+). Its pathway is amino-acid biosynthesis; L-leucine biosynthesis; L-leucine from 3-methyl-2-oxobutanoate: step 1/4. Functionally, catalyzes the condensation of the acetyl group of acetyl-CoA with 3-methyl-2-oxobutanoate (2-ketoisovalerate) to form 3-carboxy-3-hydroxy-4-methylpentanoate (2-isopropylmalate). The chain is 2-isopropylmalate synthase from Nitrosococcus oceani (strain ATCC 19707 / BCRC 17464 / JCM 30415 / NCIMB 11848 / C-107).